A 399-amino-acid chain; its full sequence is Centrosomal protein 43 (399 aa).

The LisH domain maps to 70 to 102 (DGRLVASLVAEFLQFFNLDFTLAVFQPETSTLQ). Disordered stretches follow at residues 139 to 218 (EKGP…SSLH) and 232 to 308 (NRTL…SESK). Thr143 bears the Phosphothreonine mark. Phosphoserine is present on residues Ser152, Ser156, and Ser160. Positions 163-172 (GKTSAQTTPS) are enriched in polar residues. Thr170 bears the Phosphothreonine mark. The span at 175-186 (PRYKGQGKKKTS) shows a compositional bias: basic residues. Ser202 is subject to Phosphoserine. Residues 205–218 (SVSLSEPKSKSSLH) show a composition bias toward low complexity. Thr234 carries the post-translational modification Phosphothreonine. Residues 245 to 256 (PDEDDMEGDSFF) are compositionally biased toward acidic residues. The segment covering 259 to 275 (PIPKPEKTYGLRKEPRK) has biased composition (basic and acidic residues). The span at 286–302 (APPLKSGLSSLAGAPSL) shows a compositional bias: low complexity. 2 positions are modified to phosphoserine: Ser301 and Ser326. The segment at 331 to 353 (TGEDDDYVDDFNSTSHRSEKSEI) is disordered. At Tyr337 the chain carries Phosphotyrosine.

This sequence belongs to the CEP43 family. In terms of assembly, homodimer. Part of a ternary complex that contains CEP350, CEP43 and MAPRE1. Interacts directly with CEP350 and MAPRE1. Interacts with CEP19. Interacts (via N-terminus) with CEP350 (via C-terminus). In terms of tissue distribution, ubiquitous. Highly expressed in heart, liver, muscle, kidney, intestine, colon, adrenal gland, prostate, testis, and pancreas.

Its subcellular location is the cytoplasm. The protein localises to the cytoskeleton. The protein resides in the microtubule organizing center. It localises to the centrosome. It is found in the centriole. Its subcellular location is the cilium basal body. Required for anchoring microtubules to the centrosomes. Required for ciliation. The sequence is that of Centrosomal protein 43 from Homo sapiens (Human).